The chain runs to 154 residues: Low molecular weight protein-tyrosine-phosphatase PtpA (154 aa).

Cysteine 8 acts as the Nucleophile in catalysis. Arginine 14 is an active-site residue. Aspartate 120 functions as the Proton donor in the catalytic mechanism.

This sequence belongs to the low molecular weight phosphotyrosine protein phosphatase family. Interacts with host CORO1A. Phosphorylations at Tyr-122 and Tyr-123 are essential for phosphatase activity.

It localises to the secreted. The enzyme catalyses O-phospho-L-tyrosyl-[protein] + H2O = L-tyrosyl-[protein] + phosphate. Functionally, secreted tyrosine phosphatase that plays a critical role during infection as a bacterial effector protein that counteracts host defenses. Required for intramacrophage survival. The chain is Low molecular weight protein-tyrosine-phosphatase PtpA (ptpA) from Staphylococcus aureus (strain MRSA252).